Here is a 566-residue protein sequence, read N- to C-terminus: Proline--tRNA ligase (566 aa).

This sequence belongs to the class-II aminoacyl-tRNA synthetase family. ProS type 1 subfamily. Homodimer.

Its subcellular location is the cytoplasm. The enzyme catalyses tRNA(Pro) + L-proline + ATP = L-prolyl-tRNA(Pro) + AMP + diphosphate. Catalyzes the attachment of proline to tRNA(Pro) in a two-step reaction: proline is first activated by ATP to form Pro-AMP and then transferred to the acceptor end of tRNA(Pro). As ProRS can inadvertently accommodate and process non-cognate amino acids such as alanine and cysteine, to avoid such errors it has two additional distinct editing activities against alanine. One activity is designated as 'pretransfer' editing and involves the tRNA(Pro)-independent hydrolysis of activated Ala-AMP. The other activity is designated 'posttransfer' editing and involves deacylation of mischarged Ala-tRNA(Pro). The misacylated Cys-tRNA(Pro) is not edited by ProRS. The protein is Proline--tRNA ligase of Bacillus cereus (strain G9842).